A 126-amino-acid chain; its full sequence is uncharacterized protein (126 aa).

A signal peptide spans 1-24 (MKMTKLATLFLTATLSLASGAALA). Low complexity predominate over residues 27–47 (SGAQTNNGQANAAADAGQVAP). The segment at 27-126 (SGAQTNNGQA…VDTKTDGTTQ (100 aa)) is disordered. Polar residues predominate over residues 54-64 (APNNVDNNGVN). Composition is skewed to basic and acidic residues over residues 84 to 105 (MTKD…DINK) and 117 to 126 (VDTKTDGTTQ).

This is an uncharacterized protein from Shigella flexneri.